The following is a 923-amino-acid chain: Alanine--tRNA ligase (923 aa).

4 residues coordinate Zn(2+): histidine 611, histidine 615, cysteine 714, and histidine 718.

This sequence belongs to the class-II aminoacyl-tRNA synthetase family. Zn(2+) is required as a cofactor.

The protein resides in the cytoplasm. It catalyses the reaction tRNA(Ala) + L-alanine + ATP = L-alanyl-tRNA(Ala) + AMP + diphosphate. Catalyzes the attachment of alanine to tRNA(Ala) in a two-step reaction: alanine is first activated by ATP to form Ala-AMP and then transferred to the acceptor end of tRNA(Ala). Also edits incorrectly charged Ser-tRNA(Ala) and Gly-tRNA(Ala) via its editing domain. The polypeptide is Alanine--tRNA ligase (Methanosarcina barkeri (strain Fusaro / DSM 804)).